Reading from the N-terminus, the 392-residue chain is HORMA domain-containing protein 1 (392 aa).

One can recognise an HORMA domain in the interval 25-227; it reads HQSLMFVKRL…TPFHTFRLKV (203 aa). Positions 323 to 359 are disordered; it reads SELDVSESKTRSGKIFQSKMVNGNNQQGQTSKENRKR. Polar residues predominate over residues 341-353; that stretch reads KMVNGNNQQGQTS. Ser-375 bears the Phosphoserine mark. Positions 381–384 match the Nuclear localization signal motif; the sequence is KKRR.

As to quaternary structure, interacts with HORMAD2. Interacts with IHO1. In terms of processing, phosphorylated at Ser-375 in a SPO11-dependent manner. As to expression, specifically expressed in meiotic germ cells.

Its subcellular location is the nucleus. It localises to the chromosome. It is found in the cytoplasm. In terms of biological role, plays a key role in meiotic progression. Regulates 3 different functions during meiosis: ensures that sufficient numbers of processed DNA double-strand breaks (DSBs) are available for successful homology search by increasing the steady-state numbers of single-stranded DSB ends. Promotes synaptonemal-complex formation independently of its role in homology search. Plays a key role in the male mid-pachytene checkpoint and the female meiotic prophase checkpoint: required for efficient build-up of ATR activity on unsynapsed chromosome regions, a process believed to form the basis of meiotic silencing of unsynapsed chromatin (MSUC) and meiotic prophase quality control in both sexes. The protein is HORMA domain-containing protein 1 of Mus musculus (Mouse).